The following is a 368-amino-acid chain: Saccharopine dehydrogenase [NAD(+), L-lysine-forming] (368 aa).

2 residues coordinate L-saccharopine: R18 and K77. Catalysis depends on K77, which acts as the Proton acceptor. Phosphoserine is present on S85. Catalysis depends on H96, which acts as the Proton donor. Q101 is an L-saccharopine binding site. R130 serves as a coordination point for NAD(+). The L-saccharopine site is built by R131 and F135. NAD(+) contacts are provided by residues 203-204 (GR), D227, T231, Y251, and V278. An intrachain disulfide couples C205 to C249. 279 to 281 (SCD) contributes to the L-saccharopine binding site. 319–322 (IDHL) is a binding site for NAD(+).

Belongs to the AlaDH/PNT family. In terms of assembly, monomer.

The catalysed reaction is L-saccharopine + NAD(+) + H2O = L-lysine + 2-oxoglutarate + NADH + H(+). It functions in the pathway amino-acid biosynthesis; L-lysine biosynthesis via AAA pathway; L-lysine from L-alpha-aminoadipate (fungal route): step 3/3. Catalyzes the NAD(+)-dependent cleavage of saccharopine to L-lysine and 2-oxoglutarate, the final step in the alpha-aminoadipate (AAA) pathway for lysin biosynthesis. The chain is Saccharopine dehydrogenase [NAD(+), L-lysine-forming] from Schizosaccharomyces pombe (strain 972 / ATCC 24843) (Fission yeast).